Reading from the N-terminus, the 141-residue chain is ATP synthase epsilon chain (141 aa).

The protein belongs to the ATPase epsilon chain family. As to quaternary structure, F-type ATPases have 2 components, CF(1) - the catalytic core - and CF(0) - the membrane proton channel. CF(1) has five subunits: alpha(3), beta(3), gamma(1), delta(1), epsilon(1). CF(0) has three main subunits: a, b and c.

The protein localises to the cell inner membrane. Functionally, produces ATP from ADP in the presence of a proton gradient across the membrane. This chain is ATP synthase epsilon chain, found in Azoarcus sp. (strain BH72).